Consider the following 514-residue polypeptide: Leucine-rich repeat-containing protein 14B (514 aa).

An LRR 1; degenerate repeat occupies 104–141 (RRRLRVADLTGIRDVQVQRCPCGRALGRWGRTQLLART). The LRR 2; degenerate repeat unit spans residues 185–209 (RVHCPSFRADSLSPSQLLHVLRLAG). An LRR 4; degenerate repeat occupies 238–277 (FPRLASLTLPTKAFDAPPTYASTPDGEDPLLASIARELSK). 5 LRR repeats span residues 278–302 (MAQLTELSVAFSTLTGKIPTLLGPL), 303–334 (QTPLRVLDLANCALNHTDMAFLADCAHAAHLE), 335–350 (VLDLSGHNLVSLYPST), 359–386 (SRTLRILTLEECGIVDSHVGMLILGLSP), and 387–411 (CHRLRQLKFLGNPLSARALRRLFTA).

This sequence belongs to the PRAME family. LRRC14 subfamily.

This Homo sapiens (Human) protein is Leucine-rich repeat-containing protein 14B.